Consider the following 435-residue polypeptide: NAD-specific glutamate dehydrogenase A (435 aa).

The segment at 1–28 is disordered; sequence MTMASKSDSTHDESGDEAADSTEPESAL. Residues 14–23 are compositionally biased toward acidic residues; that stretch reads SGDEAADSTE. K126 is a catalytic residue.

Belongs to the Glu/Leu/Phe/Val dehydrogenases family. As to quaternary structure, homohexamer. Post-translationally, the N-terminus is blocked.

The catalysed reaction is L-glutamate + NAD(+) + H2O = 2-oxoglutarate + NH4(+) + NADH + H(+). With respect to regulation, inhibited by ethanol, acetone, acetonitrile and 2-propanol (65 to 70% inhibition) and to a lesser extent by methanol and dimethyl formamide (26 and 49 % inhibition respectively). No effect of glycerol or DMSO. This chain is NAD-specific glutamate dehydrogenase A (gdhX), found in Halobacterium salinarum (Halobacterium halobium).